Reading from the N-terminus, the 297-residue chain is ATP phosphoribosyltransferase (297 aa).

This sequence belongs to the ATP phosphoribosyltransferase family.

It localises to the cytoplasm. It carries out the reaction 1-(5-phospho-beta-D-ribosyl)-ATP + diphosphate = 5-phospho-alpha-D-ribose 1-diphosphate + ATP. It functions in the pathway amino-acid biosynthesis; L-histidine biosynthesis; L-histidine from 5-phospho-alpha-D-ribose 1-diphosphate: step 1/9. Functionally, catalyzes the condensation of ATP and 5-phosphoribose 1-diphosphate to form N'-(5'-phosphoribosyl)-ATP (PR-ATP). Has a crucial role in the pathway because the rate of histidine biosynthesis seems to be controlled primarily by regulation of the enzymatic activity. The chain is ATP phosphoribosyltransferase (HIS1) from Kluyveromyces lactis (strain ATCC 8585 / CBS 2359 / DSM 70799 / NBRC 1267 / NRRL Y-1140 / WM37) (Yeast).